Here is a 290-residue protein sequence, read N- to C-terminus: Diaminopimelate epimerase (290 aa).

Residues Asn17, Gln49, and Asn69 each contribute to the substrate site. Cys78 acts as the Proton donor in catalysis. Residues 79-80 (GN), Asn166, Asn199, and 217-218 (ER) contribute to the substrate site. The active-site Proton acceptor is the Cys226. 227–228 (GS) is a binding site for substrate.

It belongs to the diaminopimelate epimerase family. As to quaternary structure, homodimer.

It localises to the cytoplasm. The enzyme catalyses (2S,6S)-2,6-diaminopimelate = meso-2,6-diaminopimelate. Its pathway is amino-acid biosynthesis; L-lysine biosynthesis via DAP pathway; DL-2,6-diaminopimelate from LL-2,6-diaminopimelate: step 1/1. Catalyzes the stereoinversion of LL-2,6-diaminopimelate (L,L-DAP) to meso-diaminopimelate (meso-DAP), a precursor of L-lysine and an essential component of the bacterial peptidoglycan. In Nitrobacter hamburgensis (strain DSM 10229 / NCIMB 13809 / X14), this protein is Diaminopimelate epimerase.